The primary structure comprises 593 residues: Dihydroxy-acid dehydratase (593 aa).

The segment covering methionine 1–glutamate 17 has biased composition (acidic residues). The tract at residues methionine 1–proline 40 is disordered. Positions glycine 22–proline 40 are enriched in basic and acidic residues. Cysteine 72 lines the [2Fe-2S] cluster pocket. Position 104 (aspartate 104) interacts with Mg(2+). Residue cysteine 145 coordinates [2Fe-2S] cluster. The Mg(2+) site is built by aspartate 146 and lysine 147. An N6-carboxylysine modification is found at lysine 147. Cysteine 217 lines the [2Fe-2S] cluster pocket. Glutamate 475 is a binding site for Mg(2+). The active-site Proton acceptor is serine 501.

It belongs to the IlvD/Edd family. In terms of assembly, homodimer. Requires [2Fe-2S] cluster as cofactor. Mg(2+) serves as cofactor.

It carries out the reaction (2R)-2,3-dihydroxy-3-methylbutanoate = 3-methyl-2-oxobutanoate + H2O. The catalysed reaction is (2R,3R)-2,3-dihydroxy-3-methylpentanoate = (S)-3-methyl-2-oxopentanoate + H2O. The protein operates within amino-acid biosynthesis; L-isoleucine biosynthesis; L-isoleucine from 2-oxobutanoate: step 3/4. Its pathway is amino-acid biosynthesis; L-valine biosynthesis; L-valine from pyruvate: step 3/4. Functionally, functions in the biosynthesis of branched-chain amino acids. Catalyzes the dehydration of (2R,3R)-2,3-dihydroxy-3-methylpentanoate (2,3-dihydroxy-3-methylvalerate) into 2-oxo-3-methylpentanoate (2-oxo-3-methylvalerate) and of (2R)-2,3-dihydroxy-3-methylbutanoate (2,3-dihydroxyisovalerate) into 2-oxo-3-methylbutanoate (2-oxoisovalerate), the penultimate precursor to L-isoleucine and L-valine, respectively. The chain is Dihydroxy-acid dehydratase from Natronomonas pharaonis (strain ATCC 35678 / DSM 2160 / CIP 103997 / JCM 8858 / NBRC 14720 / NCIMB 2260 / Gabara) (Halobacterium pharaonis).